The primary structure comprises 137 residues: Putative pre-16S rRNA nuclease (137 aa).

It belongs to the YqgF nuclease family.

The protein resides in the cytoplasm. Functionally, could be a nuclease involved in processing of the 5'-end of pre-16S rRNA. The chain is Putative pre-16S rRNA nuclease from Bacillus cereus (strain 03BB102).